The chain runs to 439 residues: MTALTRMKFPKRYVIVLLTFICTNVCYIERVGFSIAYTVAADAIGVNQANKGMILSMFYYGYVLSQIPGGWAAQRIGGRRVLLLSFVLWSLICGLIPLDPKREVILVLSRLFVGVAQGFIFPAIHTVLAQWVPPQERSRSVSLTTSGMYLGAAGGMLFFPSLVKHMGAQSVFFVEAVLGVAWSVIWLKFSSEPPRTDLPKVSMPKVASREKIKAQAGGVVAPRTVKIPWRRIIFSLPVWAIVVNNFTFHYALYVLMNWLPTYFELGLQLSLQDMGSSKMLPYFNMFIFSNIGGVVADHLITRRILSITKTRKLLNTIGFVVSAVALMALPLFRTPSGTVLCSSISLGFLALGRAGFAVNHMDVAPKFAGIVMGVSNTAGTLAGIVGVGLTGSILEGAKASNMDLTNSETWKTVFFVPGYLCIFSSIIFLIFSTGEKIFE.

The signal sequence occupies residues 1–28 (MTALTRMKFPKRYVIVLLTFICTNVCYI). 11 consecutive transmembrane segments (helical) span residues 53–73 (MILSMFYYGYVLSQIPGGWAA), 81–101 (VLLLSFVLWSLICGLIPLDPK), 104–124 (VILVLSRLFVGVAQGFIFPAI), 143–163 (LTTSGMYLGAAGGMLFFPSLV), 167–187 (GAQSVFFVEAVLGVAWSVIWL), 232–252 (IIFSLPVWAIVVNNFTFHYAL), 280–300 (LPYFNMFIFSNIGGVVADHLI), 312–332 (KLLNTIGFVVSAVALMALPLF), 338–358 (TVLCSSISLGFLALGRAGFAV), 367–387 (FAGIVMGVSNTAGTLAGIVGV), and 412–432 (TVFFVPGYLCIFSSIIFLIFS).

The protein belongs to the major facilitator superfamily. Sodium/anion cotransporter (TC 2.A.1.14) family.

The protein localises to the cell membrane. Probable anion transporter. In Oryza sativa subsp. japonica (Rice), this protein is Probable anion transporter 7 (PHT4;7).